A 204-amino-acid polypeptide reads, in one-letter code: Large ribosomal subunit protein bL25 (204 aa).

This sequence belongs to the bacterial ribosomal protein bL25 family. CTC subfamily. Part of the 50S ribosomal subunit; part of the 5S rRNA/L5/L18/L25 subcomplex. Contacts the 5S rRNA. Binds to the 5S rRNA independently of L5 and L18.

Its function is as follows. This is one of the proteins that binds to the 5S RNA in the ribosome where it forms part of the central protuberance. The sequence is that of Large ribosomal subunit protein bL25 from Pseudomonas paraeruginosa (strain DSM 24068 / PA7) (Pseudomonas aeruginosa (strain PA7)).